The chain runs to 1388 residues: Endoribonuclease Dicer homolog 2 (1388 aa).

The region spanning alanine 31–leucine 210 is the Helicase ATP-binding domain. Position 44–51 (leucine 44–threonine 51) interacts with ATP. Residues aspartate 152–histidine 155 carry the DECH box motif. The region spanning leucine 380 to leucine 544 is the Helicase C-terminal domain. Positions serine 559 to valine 645 constitute a Dicer dsRNA-binding fold domain. The 131-residue stretch at threonine 805–leucine 935 folds into the PAZ domain. RNase III domains lie at alanine 962 to glycine 1113 and valine 1149 to glycine 1296. Residues glutamate 1188, aspartate 1282, and glutamate 1285 each coordinate Mg(2+). The region spanning threonine 1315–asparagine 1384 is the DRBM domain.

This sequence belongs to the helicase family. Dicer subfamily. Mg(2+) serves as cofactor. The cofactor is Mn(2+).

The protein resides in the nucleus. Its subcellular location is the cytoplasm. In terms of biological role, ribonuclease (RNase) III involved in RNA-mediated post-transcriptional gene silencing (PTGS). Involved in the processing of natural small interfering RNAs (nat-siRNAs, derived from cis-natural antisense transcripts) by cleaving small dsRNAs into 24 nucleotide nat-siRNAs. Plays an essential role in transitive silencing of transgenes by processing secondary siRNAs. This pathway, which requires DCL4 and RDR6, amplifies silencing by using the target RNA as substrate to generate secondary siRNAs, providing an efficient mechanism for long-distance silencing. May participate with DCL3 in the production of 24 nucleotide repeat-associated siRNAs (ra-siRNAs) which derive from heterochromatin and DNA repeats such as transposons. Plays a role in antiviral RNA silencing. Involved in the production of viral siRNAs derived from the turnip crinkle virus (TCV) and tobacco rattle virus (TRV). Targeted by the viral silencing suppressor (VSR) protein 2b of the cucumber mosaic virus (CMV) that inactivates DCL2 function in RNA silencing. Does not seem to be involved in microRNAs (miRNAs) processing. In Arabidopsis thaliana (Mouse-ear cress), this protein is Endoribonuclease Dicer homolog 2.